Here is a 129-residue protein sequence, read N- to C-terminus: Small ribosomal subunit protein uS11 (129 aa).

This sequence belongs to the universal ribosomal protein uS11 family. In terms of assembly, part of the 30S ribosomal subunit. Interacts with proteins S7 and S18. Binds to IF-3.

Its function is as follows. Located on the platform of the 30S subunit, it bridges several disparate RNA helices of the 16S rRNA. Forms part of the Shine-Dalgarno cleft in the 70S ribosome. In Limosilactobacillus reuteri (strain DSM 20016) (Lactobacillus reuteri), this protein is Small ribosomal subunit protein uS11.